A 381-amino-acid chain; its full sequence is L-lactate dehydrogenase (381 aa).

The FMN hydroxy acid dehydrogenase domain occupies 1-380 (MIISASTDYR…TRDSLVRELG (380 aa)). Y24 lines the substrate pocket. 2 residues coordinate FMN: S106 and Q127. Y129 is a substrate binding site. T155 provides a ligand contact to FMN. A substrate-binding site is contributed by R164. K251 contacts FMN. The Proton acceptor role is filled by H275. R278 is a substrate binding site. 306 to 330 (DSGIRSGLDVVRMIALGADTVLIGR) is an FMN binding site.

The protein belongs to the FMN-dependent alpha-hydroxy acid dehydrogenase family. In terms of assembly, homotetramer. FMN serves as cofactor.

It localises to the cell inner membrane. It carries out the reaction (S)-lactate + A = pyruvate + AH2. Catalyzes the conversion of L-lactate to pyruvate. Is coupled to the respiratory chain. The polypeptide is L-lactate dehydrogenase (Pseudomonas putida (strain ATCC 700007 / DSM 6899 / JCM 31910 / BCRC 17059 / LMG 24140 / F1)).